We begin with the raw amino-acid sequence, 178 residues long: Large ribosomal subunit protein eL20 (178 aa).

The protein belongs to the eukaryotic ribosomal protein eL20 family.

The polypeptide is Large ribosomal subunit protein eL20 (RPL18A) (Oryza sativa subsp. japonica (Rice)).